Reading from the N-terminus, the 646-residue chain is Microtubule-associated protein 9 (646 aa).

Residue S2 is modified to N-acetylserine. Residue Y12 is modified to Phosphotyrosine. 6 disordered regions span residues D75–E226, S242–D418, R491–A511, R531–D554, L570–Q597, and K609–F646. Polar residues-rich tracts occupy residues A105–D119 and R157–G167. The span at S188–I204 shows a compositional bias: basic and acidic residues. 3 stretches are compositionally biased toward polar residues: residues S205–L222, L280–L291, and P330–T340. Residues E346–T357 are compositionally biased toward basic and acidic residues. A compositionally biased stretch (polar residues) spans T386 to Y398. Basic and acidic residues predominate over residues L405–D418. The stretch at M442–K596 forms a coiled coil. The span at P637–F646 shows a compositional bias: polar residues.

As to quaternary structure, binds to purified microtubules via its C-terminus.

The protein localises to the cytoplasm. It is found in the cytoskeleton. It localises to the spindle. In terms of biological role, involved in organization of the bipolar mitotic spindle. Required for bipolar spindle assembly, mitosis progression and cytokinesis. May act by stabilizing interphase microtubules. The chain is Microtubule-associated protein 9 (Map9) from Mus musculus (Mouse).